Here is a 759-residue protein sequence, read N- to C-terminus: Protein zyg-11 homolog A (759 aa).

LRR repeat units follow at residues 204–227 (LPRLESLDISNTLVTDISALLTCK), 235–260 (MHYLKCLAMTKSQILAVIRELKCLLH), and 490–513 (VTSILALQLSPEQTAQLEELFMAV).

Belongs to the zyg-11 family.

Functionally, probably acts as a target recruitment subunit in an E3 ubiquitin ligase complex ZYGA-CUL2-elongin BC. The sequence is that of Protein zyg-11 homolog A (ZYG11A) from Homo sapiens (Human).